Consider the following 426-residue polypeptide: tRNA(Ile)-lysidine synthase (426 aa).

ATP is bound at residue 19 to 24 (SGGLDS).

This sequence belongs to the tRNA(Ile)-lysidine synthase family.

It is found in the cytoplasm. The catalysed reaction is cytidine(34) in tRNA(Ile2) + L-lysine + ATP = lysidine(34) in tRNA(Ile2) + AMP + diphosphate + H(+). Functionally, ligates lysine onto the cytidine present at position 34 of the AUA codon-specific tRNA(Ile) that contains the anticodon CAU, in an ATP-dependent manner. Cytidine is converted to lysidine, thus changing the amino acid specificity of the tRNA from methionine to isoleucine. The polypeptide is tRNA(Ile)-lysidine synthase (Neisseria meningitidis serogroup A / serotype 4A (strain DSM 15465 / Z2491)).